We begin with the raw amino-acid sequence, 115 residues long: T cell receptor beta variable 7-2 (115 aa).

Positions 1–21 (MGTRLLFWVAFCLLGADHTGA) are cleaved as a signal peptide. The region spanning 22-115 (GVSQSPSNKV…SAVYLCASSL (94 aa)) is the Ig-like domain. A disulfide bridge links Cys-42 with Cys-111.

Alpha-beta TR is a heterodimer composed of an alpha and beta chain; disulfide-linked. The alpha-beta TR is associated with the transmembrane signaling CD3 coreceptor proteins to form the TR-CD3 (TcR or TCR). The assembly of alpha-beta TR heterodimers with CD3 occurs in the endoplasmic reticulum where a single alpha-beta TR heterodimer associates with one CD3D-CD3E heterodimer, one CD3G-CD3E heterodimer and one CD247 homodimer forming a stable octameric structure. CD3D-CD3E and CD3G-CD3E heterodimers preferentially associate with TR alpha and TR beta chains, respectively. The association of the CD247 homodimer is the last step of TcR assembly in the endoplasmic reticulum and is required for transport to the cell surface.

Its subcellular location is the cell membrane. V region of the variable domain of T cell receptor (TR) beta chain that participates in the antigen recognition. Alpha-beta T cell receptors are antigen specific receptors which are essential to the immune response and are present on the cell surface of T lymphocytes. Recognize peptide-major histocompatibility (MH) (pMH) complexes that are displayed by antigen presenting cells (APC), a prerequisite for efficient T cell adaptive immunity against pathogens. Binding of alpha-beta TR to pMH complex initiates TR-CD3 clustering on the cell surface and intracellular activation of LCK that phosphorylates the ITAM motifs of CD3G, CD3D, CD3E and CD247 enabling the recruitment of ZAP70. In turn ZAP70 phosphorylates LAT, which recruits numerous signaling molecules to form the LAT signalosome. The LAT signalosome propagates signal branching to three major signaling pathways, the calcium, the mitogen-activated protein kinase (MAPK) kinase and the nuclear factor NF-kappa-B (NF-kB) pathways, leading to the mobilization of transcription factors that are critical for gene expression and essential for T cell growth and differentiation. The T cell repertoire is generated in the thymus, by V-(D)-J rearrangement. This repertoire is then shaped by intrathymic selection events to generate a peripheral T cell pool of self-MH restricted, non-autoaggressive T cells. Post-thymic interaction of alpha-beta TR with the pMH complexes shapes TR structural and functional avidity. The polypeptide is T cell receptor beta variable 7-2 (Homo sapiens (Human)).